The sequence spans 442 residues: Methionine aminopeptidase 2-1 (442 aa).

The disordered stretch occupies residues 1–92 (MAAQASEELE…ISELFPNNQY (92 aa)). Positions 15 to 25 (NGQNGHAQEQV) are enriched in polar residues. The span at 30–47 (EAADNDDSEDDEKEEEGG) shows a compositional bias: acidic residues. A compositionally biased stretch (basic residues) spans 56–72 (AKKKKKRKPKKKKKGGA). His195 serves as a coordination point for substrate. The a divalent metal cation site is built by Asp215, Asp226, and His295. Residue His303 participates in substrate binding. A divalent metal cation contacts are provided by Glu328 and Glu423.

Belongs to the peptidase M24A family. Methionine aminopeptidase eukaryotic type 2 subfamily. It depends on Co(2+) as a cofactor. Zn(2+) is required as a cofactor. The cofactor is Mn(2+). Requires Fe(2+) as cofactor.

It is found in the cytoplasm. It catalyses the reaction Release of N-terminal amino acids, preferentially methionine, from peptides and arylamides.. Cotranslationally removes the N-terminal methionine from nascent proteins. The N-terminal methionine is often cleaved when the second residue in the primary sequence is small and uncharged (Met-Ala-, Cys, Gly, Pro, Ser, Thr, or Val). The polypeptide is Methionine aminopeptidase 2-1 (Talaromyces marneffei (strain ATCC 18224 / CBS 334.59 / QM 7333) (Penicillium marneffei)).